The following is a 511-amino-acid chain: Potassium voltage-gated channel subfamily A member 10 (511 aa).

A disordered region spans residues 22–50 (IQEEPGYATDFDSTSPKGRPGGSSFSNGK). Residues 218–238 (VAVVSVLVVVISITIFCLETL) form a helical membrane-spanning segment. Asn256 carries N-linked (GlcNAc...) asparagine glycosylation. The chain crosses the membrane as a helical span at residues 271–292 (FFMVESTCIVWFTFELVLRFVV). Residue Cys293 is the site of S-palmitoyl cysteine attachment. A helical transmembrane segment spans residues 303–323 (IMNIIDIISIIPYFATLITEL). N-linked (GlcNAc...) asparagine glycosylation occurs at Asn334. The chain crosses the membrane as a helical; Voltage-sensor span at residues 339–358 (ILRIIRLVRVFRIFKLSRHS). Residues 375–395 (LGLLIFFLFIGVILFSSAVYF) form a helical membrane-spanning segment. Residues 421–426 (TVGYGD) carry the Selectivity filter motif. Residues 436-456 (IVGTLCAIAGVLTIALPVPVI) form a helical membrane-spanning segment. The tract at residues 489 to 511 (SRMGSTDSLNKTNGGCSTEKSRK) is disordered. N-linked (GlcNAc...) asparagine glycosylation is present at Asn498.

It belongs to the potassium channel family. A (Shaker) (TC 1.A.1.2) subfamily. Kv1.8/KCNA10 sub-subfamily. As to quaternary structure, homotetramer. Interacts with KCN4B/POMP. Interaction with KCN4B/POMP is necessary for the modulation of channel activity by cAMP. As to expression, detected in kidney, in proximal tubules, glomerular endothelium, in vascular endothelium and in smooth muscle cells.

Its subcellular location is the membrane. It catalyses the reaction K(+)(in) = K(+)(out). Its activity is regulated as follows. The channel activity is up-regulated by cAMP. Its function is as follows. Voltage-gated potassium ion channel that mediates K(+) permeability of excitable membranes. When opened in response to the voltage difference across the membrane, KCNA10 channel selectively allows the flow of potassium ions across the membrane down their electrochemical gradient. This Homo sapiens (Human) protein is Potassium voltage-gated channel subfamily A member 10.